The sequence spans 321 residues: UPF0676 protein C1494.01 (321 aa).

The 109-residue stretch at 159-267 (EEDVLRLLKY…RQTIAYFVTP (109 aa)) folds into the Fe2OG dioxygenase domain.

Belongs to the UPF0676 family.

The protein resides in the cytoplasm. It is found in the nucleus. The protein is UPF0676 protein C1494.01 of Schizosaccharomyces pombe (strain 972 / ATCC 24843) (Fission yeast).